Consider the following 114-residue polypeptide: Evasin-1 (114 aa).

The N-terminal stretch at 1 to 20 is a signal peptide; it reads MTFKACIAIITALCAMQVIC. Intrachain disulfides connect Cys-32-Cys-53, Cys-49-Cys-90, Cys-66-Cys-95, and Cys-85-Cys-104. N-linked (GlcNAc...) asparagine glycans are attached at residues Asn-39, Asn-54, and Asn-62.

This sequence belongs to the evasin C8 family. Monomer.

It localises to the secreted. Its function is as follows. Salivary chemokine-binding protein which shows chemokine neutralizing activity and binds to host chemokines CCL3, CCL4 and CCL18. Binds to CCL3 with 1:1 stoichiometry. The protein is Evasin-1 of Rhipicephalus sanguineus (Brown dog tick).